A 309-amino-acid chain; its full sequence is Ribonuclease Z (309 aa).

Residues H63, H65, D67, H68, H145, D216, and H274 each contribute to the Zn(2+) site. The active-site Proton acceptor is D67.

It belongs to the RNase Z family. In terms of assembly, homodimer. Zn(2+) serves as cofactor.

The catalysed reaction is Endonucleolytic cleavage of RNA, removing extra 3' nucleotides from tRNA precursor, generating 3' termini of tRNAs. A 3'-hydroxy group is left at the tRNA terminus and a 5'-phosphoryl group is left at the trailer molecule.. Zinc phosphodiesterase, which displays some tRNA 3'-processing endonuclease activity. Probably involved in tRNA maturation, by removing a 3'-trailer from precursor tRNA. In Streptococcus pneumoniae (strain 70585), this protein is Ribonuclease Z.